A 381-amino-acid chain; its full sequence is Putative F-box protein At4g17200 (381 aa).

In terms of domain architecture, F-box spans 1 to 47 (MTTMSDLSPDLVGEILTRVPMTSLISVRCTCKMWNALSKEGIFFKAA).

The protein is Putative F-box protein At4g17200 of Arabidopsis thaliana (Mouse-ear cress).